The following is a 229-amino-acid chain: Uracil-DNA glycosylase (229 aa).

Residue Asp64 is the Proton acceptor of the active site.

Belongs to the uracil-DNA glycosylase (UDG) superfamily. UNG family.

The protein localises to the cytoplasm. It catalyses the reaction Hydrolyzes single-stranded DNA or mismatched double-stranded DNA and polynucleotides, releasing free uracil.. Functionally, excises uracil residues from the DNA which can arise as a result of misincorporation of dUMP residues by DNA polymerase or due to deamination of cytosine. The chain is Uracil-DNA glycosylase from Escherichia coli O81 (strain ED1a).